An 84-amino-acid chain; its full sequence is Putative membrane protein insertion efficiency factor (84 aa).

It belongs to the UPF0161 family.

The protein resides in the cell inner membrane. Its function is as follows. Could be involved in insertion of integral membrane proteins into the membrane. The chain is Putative membrane protein insertion efficiency factor from Acidiphilium cryptum (strain JF-5).